A 443-amino-acid polypeptide reads, in one-letter code: Ribosomal protein uS12 methylthiotransferase RimO (443 aa).

The MTTase N-terminal domain maps to P5–P115. [4Fe-4S] cluster is bound by residues C14, C50, C79, C147, C151, and C154. The Radical SAM core domain maps to L133–A374. In terms of domain architecture, TRAM spans Q377–C443.

The protein belongs to the methylthiotransferase family. RimO subfamily. The cofactor is [4Fe-4S] cluster.

Its subcellular location is the cytoplasm. The catalysed reaction is L-aspartate(89)-[ribosomal protein uS12]-hydrogen + (sulfur carrier)-SH + AH2 + 2 S-adenosyl-L-methionine = 3-methylsulfanyl-L-aspartate(89)-[ribosomal protein uS12]-hydrogen + (sulfur carrier)-H + 5'-deoxyadenosine + L-methionine + A + S-adenosyl-L-homocysteine + 2 H(+). In terms of biological role, catalyzes the methylthiolation of an aspartic acid residue of ribosomal protein uS12. This is Ribosomal protein uS12 methylthiotransferase RimO from Actinobacillus pleuropneumoniae serotype 5b (strain L20).